The following is a 264-amino-acid chain: ATP synthase subunit a (264 aa).

Helical transmembrane passes span 39–59, 97–117, 139–159, 205–225, and 239–259; these read LDTLIISVVLGALFILIFYII, VAPLALTIFIWVFLMNFMDLV, TADPTLTFAMSITVFVLVVFY, LFGNLFAGELIFILIALLPWW, and LLVITVQAFIFMMLTVVYISL.

It belongs to the ATPase A chain family. F-type ATPases have 2 components, CF(1) - the catalytic core - and CF(0) - the membrane proton channel. CF(1) has five subunits: alpha(3), beta(3), gamma(1), delta(1), epsilon(1). CF(0) has three main subunits: a(1), b(2) and c(9-12). The alpha and beta chains form an alternating ring which encloses part of the gamma chain. CF(1) is attached to CF(0) by a central stalk formed by the gamma and epsilon chains, while a peripheral stalk is formed by the delta and b chains.

It is found in the cell inner membrane. Functionally, key component of the proton channel; it plays a direct role in the translocation of protons across the membrane. This chain is ATP synthase subunit a, found in Coxiella burnetii (strain CbuG_Q212) (Coxiella burnetii (strain Q212)).